Reading from the N-terminus, the 326-residue chain is Nicotianamine synthase 2 (326 aa).

It belongs to the nicotianamine synthase (NAS)-like family. In terms of tissue distribution, expressed in roots.

It catalyses the reaction 3 S-adenosyl-L-methionine = nicotianamine + 3 S-methyl-5'-thioadenosine + 3 H(+). In terms of biological role, synthesizes nicotianamine, a polyamine that is the first intermediate in the synthesis of the phytosiderophores of the mugineic acid type found in gramineae which serve as a sensor for the physiological iron status within the plant, and/or might be involved in the transport of iron. The polypeptide is Nicotianamine synthase 2 (NAS2) (Oryza sativa subsp. indica (Rice)).